Consider the following 909-residue polypeptide: Protein translocase subunit SecA (909 aa).

ATP contacts are provided by residues Gln-87, 105–109 (GEGKT), and Asp-507. The interval 857–909 (DTHSELAEEQPPVAENRENKQQPFVRKNEKVGRNDPCPCGSGKKYKQCHGKLN) is disordered. Residues 871–889 (ENRENKQQPFVRKNEKVGR) are compositionally biased toward basic and acidic residues. Residues Cys-893, Cys-895, Cys-904, and His-905 each coordinate Zn(2+). The segment covering 899 to 909 (KKYKQCHGKLN) has biased composition (basic residues).

It belongs to the SecA family. In terms of assembly, monomer and homodimer. Part of the essential Sec protein translocation apparatus which comprises SecA, SecYEG and auxiliary proteins SecDF-YajC and YidC. It depends on Zn(2+) as a cofactor.

It localises to the cell inner membrane. The protein localises to the cytoplasm. The enzyme catalyses ATP + H2O + cellular proteinSide 1 = ADP + phosphate + cellular proteinSide 2.. In terms of biological role, part of the Sec protein translocase complex. Interacts with the SecYEG preprotein conducting channel. Has a central role in coupling the hydrolysis of ATP to the transfer of proteins into and across the cell membrane, serving both as a receptor for the preprotein-SecB complex and as an ATP-driven molecular motor driving the stepwise translocation of polypeptide chains across the membrane. The protein is Protein translocase subunit SecA of Nitrosomonas europaea (strain ATCC 19718 / CIP 103999 / KCTC 2705 / NBRC 14298).